The chain runs to 80 residues: Serine rich endogenous peptide 18 (80 aa).

Residues 1-25 (MYNVVVCLLTLSFLLLTGLSNTAEA) form the signal peptide. The SCOOP motif signature appears at 45–59 (KAEVGGSCSPHAHGR). The disordered stretch occupies residues 50–80 (GSCSPHAHGRGPPNRPGSSNIPGSPKRCTKP). Positions 51–53 (SCS) match the SxS motif essential for MIK2 binding motif.

This sequence belongs to the serine rich endogenous peptide (SCOOP) phytocytokine family. In terms of assembly, interacts with MIK2 (via extracellular leucine-rich repeat domain); this interaction triggers the formation of complex between MIK2 and the BAK1/SERK3 and SERK4 coreceptors, and subsequent BAK1 activation by phosphorylation.

The protein resides in the cell membrane. The protein localises to the secreted. It is found in the extracellular space. Its subcellular location is the apoplast. In terms of biological role, brassicaceae-specific phytocytokine (plant endogenous peptide released into the apoplast) perceived by MIK2 in a BAK1/SERK3 and SERK4 coreceptors-dependent manner, that modulates various physiological and antimicrobial processes including growth prevention and reactive oxygen species (ROS) response regulation. The chain is Serine rich endogenous peptide 18 from Arabidopsis thaliana (Mouse-ear cress).